We begin with the raw amino-acid sequence, 106 residues long: Small ribosomal subunit protein mS33 (106 aa).

Position 2 is an N-acetylserine (Ser2). The disordered stretch occupies residues 81–106; the sequence is EQRRLKKLRGKGKPRKGEGKRATKKK. Residues 84-94 are compositionally biased toward basic residues; that stretch reads RLKKLRGKGKP. Residues 95 to 106 show a composition bias toward basic and acidic residues; that stretch reads RKGEGKRATKKK.

It belongs to the mitochondrion-specific ribosomal protein mS33 family. In terms of assembly, component of the mitochondrial ribosome small subunit (28S) which comprises a 12S rRNA and about 30 distinct proteins.

It is found in the mitochondrion. The polypeptide is Small ribosomal subunit protein mS33 (Mrps33) (Mus musculus (Mouse)).